The chain runs to 274 residues: Diaminopimelate epimerase (274 aa).

Residues Asn11, Gln44, and Asn64 each contribute to the substrate site. Catalysis depends on Cys73, which acts as the Proton donor. Residues 74–75 (GN), Asn157, Asn190, and 208–209 (ER) contribute to the substrate site. Cys217 functions as the Proton acceptor in the catalytic mechanism. 218 to 219 (GS) lines the substrate pocket.

Belongs to the diaminopimelate epimerase family. In terms of assembly, homodimer.

It localises to the cytoplasm. The catalysed reaction is (2S,6S)-2,6-diaminopimelate = meso-2,6-diaminopimelate. The protein operates within amino-acid biosynthesis; L-lysine biosynthesis via DAP pathway; DL-2,6-diaminopimelate from LL-2,6-diaminopimelate: step 1/1. Functionally, catalyzes the stereoinversion of LL-2,6-diaminopimelate (L,L-DAP) to meso-diaminopimelate (meso-DAP), a precursor of L-lysine and an essential component of the bacterial peptidoglycan. In Pectobacterium atrosepticum (strain SCRI 1043 / ATCC BAA-672) (Erwinia carotovora subsp. atroseptica), this protein is Diaminopimelate epimerase.